The following is a 305-amino-acid chain: Probable xyloglucan endotransglucosylase/hydrolase protein 21 (305 aa).

The first 25 residues, 1–25, serve as a signal peptide directing secretion; that stretch reads MVSSTLLVMSISLFLGLSILLVVHG. Residues 26 to 216 enclose the GH16 domain; the sequence is KDFNQDIDIT…WSQGPFVASF (191 aa). N-linked (GlcNAc...) asparagine glycosylation occurs at Asn46. The active-site Nucleophile is the Glu102. The active-site Proton donor is Glu106. A xyloglucan-binding site is contributed by Glu106. N-linked (GlcNAc...) asparagine glycosylation occurs at Asn110. Residues 119 to 121 and 129 to 131 each bind xyloglucan; these read HTN and DRE. N-linked (GlcNAc...) asparagine glycosylation occurs at Asn146. Xyloglucan contacts are provided by residues 195-196 and Gly200; that span reads DW. 2 N-linked (GlcNAc...) asparagine glycosylation sites follow: Asn206 and Asn231. Disulfide bonds link Cys225–Cys239 and Cys282–Cys296. The segment covering 236-253 has biased composition (low complexity); the sequence is TSPCSPGDSTSSSSSSTS. The interval 236–258 is disordered; that stretch reads TSPCSPGDSTSSSSSSTSEWFSQ. Arg287 provides a ligand contact to xyloglucan.

The protein belongs to the glycosyl hydrolase 16 family. XTH group 2 subfamily. Contains at least one intrachain disulfide bond essential for its enzymatic activity. In terms of tissue distribution, predominantly expressed in green siliques.

The protein localises to the secreted. Its subcellular location is the cell wall. It localises to the extracellular space. It is found in the apoplast. It catalyses the reaction breaks a beta-(1-&gt;4) bond in the backbone of a xyloglucan and transfers the xyloglucanyl segment on to O-4 of the non-reducing terminal glucose residue of an acceptor, which can be a xyloglucan or an oligosaccharide of xyloglucan.. Its function is as follows. Catalyzes xyloglucan endohydrolysis (XEH) and/or endotransglycosylation (XET). Cleaves and religates xyloglucan polymers, an essential constituent of the primary cell wall, and thereby participates in cell wall construction of growing tissues. The chain is Probable xyloglucan endotransglucosylase/hydrolase protein 21 (XTH21) from Arabidopsis thaliana (Mouse-ear cress).